Here is a 377-residue protein sequence, read N- to C-terminus: Succinyl-diaminopimelate desuccinylase (377 aa).

H67 contributes to the Zn(2+) binding site. D69 is a catalytic residue. D100 provides a ligand contact to Zn(2+). E134 serves as the catalytic Proton acceptor. 3 residues coordinate Zn(2+): E135, E163, and H349.

It belongs to the peptidase M20A family. DapE subfamily. Homodimer. The cofactor is Zn(2+). Co(2+) is required as a cofactor.

The catalysed reaction is N-succinyl-(2S,6S)-2,6-diaminopimelate + H2O = (2S,6S)-2,6-diaminopimelate + succinate. It functions in the pathway amino-acid biosynthesis; L-lysine biosynthesis via DAP pathway; LL-2,6-diaminopimelate from (S)-tetrahydrodipicolinate (succinylase route): step 3/3. Functionally, catalyzes the hydrolysis of N-succinyl-L,L-diaminopimelic acid (SDAP), forming succinate and LL-2,6-diaminopimelate (DAP), an intermediate involved in the bacterial biosynthesis of lysine and meso-diaminopimelic acid, an essential component of bacterial cell walls. This is Succinyl-diaminopimelate desuccinylase from Haemophilus influenzae (strain PittGG).